The following is a 384-amino-acid chain: Na(+)/H(+) antiporter NhaA (384 aa).

11 helical membrane passes run 9–29 (NLETIGGILLFIAAVLAIIIA), 58–78 (LLLWINDGLMAIYFLLIGLEI), 94–114 (LVPALTALAGLLFPALIFIFF), 124–144 (GWAIPTATDIAFTLGIVSLLG), 153–173 (ILLTAIAIFDDIAAIVIIALF), 179–199 (SLLSLSLALVFTLILIGLNYF), 204–224 (ISVFMLFGVALWIAVLKSGVH), 256–276 (VVFLILPLFAFANAGVSFVGL), 285–305 (VVLGIGLGLFLGKQLGIFLSL), 325–345 (VYGIALICGVGFTMSLFIGSL), and 357–377 (MVKIGVVFGSFIAGLTGFLVL).

This sequence belongs to the NhaA Na(+)/H(+) (TC 2.A.33) antiporter family.

It is found in the cell inner membrane. It catalyses the reaction Na(+)(in) + 2 H(+)(out) = Na(+)(out) + 2 H(+)(in). Na(+)/H(+) antiporter that extrudes sodium in exchange for external protons. This Legionella pneumophila (strain Lens) protein is Na(+)/H(+) antiporter NhaA.